A 470-amino-acid chain; its full sequence is Nuclear receptor subfamily 0 group B member 1 (470 aa).

Repeat copies occupy residues 1 to 67 (MAGE…YRCC), 68 to 133 (FCGK…YRCC), and 134 to 200 (FCGE…YRCC). The interval 1–253 (MAGENHQWQG…RPVALKNPQV (253 aa)) is 4 X 67 AA tandem repeats. Short sequence motifs (LXXLL motif) lie at residues 13-17 (LYNML), 80-84 (LYSML), and 146-150 (LYSLL). The stretch at 201-253 (FCGEDHPQQGSTLYCMPTSTNQAQAAPEERPRAPWWDTSSGALRPVALKNPQV) is one 4; truncated repeat. The region spanning 205–469 (DHPQQGSTLY…DMMLEMLCTK (265 aa)) is the NR LBD domain. An AF-2 motif motif is present at residues 461 to 466 (MMLEML).

It belongs to the nuclear hormone receptor family. NR0 subfamily. In terms of assembly, homodimer. Interacts with NR5A1, NR5A2, NR0B2 and with COPS2. Interacts with ESRRB; represses ESRRB activity at the GATA6 promoter.

The protein resides in the nucleus. The protein localises to the cytoplasm. Its function is as follows. Nuclear receptor that lacks a DNA-binding domain and acts as a corepressor that inhibits the transcriptional activity of other nuclear receptors through heterodimeric interactions. Component of a cascade required for the development of the hypothalamic-pituitary-adrenal-gonadal axis. May also have a role in the development of the embryo and in the maintenance of embryonic stem cell pluripotency. The sequence is that of Nuclear receptor subfamily 0 group B member 1 (NR0B1) from Macaca mulatta (Rhesus macaque).